A 405-amino-acid chain; its full sequence is Prostaglandin E2 receptor EP1 subtype (405 aa).

The Extracellular segment spans residues 1-39; that stretch reads MSPCGLNLSLADEAATCATPRLPNTSVVLPTGDNGTSPA. N-linked (GlcNAc...) asparagine glycans are attached at residues asparagine 7, asparagine 24, and asparagine 34. Residues 40–62 form a helical membrane-spanning segment; that stretch reads LPIFSMTLGAVSNVLALALLAQV. The Cytoplasmic segment spans residues 63 to 80; sequence AGRMRRRRSAATFLLFVA. A helical transmembrane segment spans residues 81–99; that stretch reads SLLAIDLAGHVIPGALVLR. At 100–113 the chain is on the extracellular side; the sequence is LYTAGRAPAGGACH. The cysteines at positions 112 and 190 are disulfide-linked. Residues 114–135 form a helical membrane-spanning segment; that stretch reads FLGGCMVFFGLCPLLLGCGMAV. Over 136-157 the chain is Cytoplasmic; the sequence is ERCVGVTQPLIHAARVSVARAR. A helical membrane pass occupies residues 158–179; that stretch reads LALAVLAAMALAVALLPLVHVG. The Extracellular segment spans residues 180–202; it reads RYELQYPGTWCFISLGPRGGWRQ. A helical membrane pass occupies residues 203-228; the sequence is ALLAGLFAGLGLAALLAALVCNTLSG. At 229-301 the chain is on the cytoplasmic side; sequence LALLRARWRR…HAHDVEMVGQ (73 aa). The interval 243–287 is disordered; the sequence is RFRKTAGPDDRRRWGSRGPRLASASSASSITSATATLRSSRGGGS. Residues 262–282 show a composition bias toward low complexity; the sequence is RLASASSASSITSATATLRSS. The chain crosses the membrane as a helical span at residues 302 to 323; the sequence is LVGIMVVSCICWSPLLVLVVLA. Residues 324–337 lie on the Extracellular side of the membrane; the sequence is IGGWNSNSLQRPLF. Residues 338–357 form a helical membrane-spanning segment; it reads LAVRLASWNQILDPWVYILL. The Cytoplasmic portion of the chain corresponds to 358-405; the sequence is RQAMLRQLLRLLPLRVSAKGGPTELGLTKSAWEASSLRSSRHSGFSHL.

The protein belongs to the G-protein coupled receptor 1 family. Phosphorylated. As to expression, abundant in kidney and in a lesser amount in lung.

It is found in the cell membrane. Receptor for prostaglandin E2 (PGE2). The activity of this receptor is mediated by G(q) proteins which activate a phosphatidylinositol-calcium second messenger system. May play a role as an important modulator of renal function. Implicated the smooth muscle contractile response to PGE2 in various tissues. The chain is Prostaglandin E2 receptor EP1 subtype (Ptger1) from Mus musculus (Mouse).